A 122-amino-acid chain; its full sequence is Large ribosomal subunit protein uL14 (122 aa).

Belongs to the universal ribosomal protein uL14 family. Part of the 50S ribosomal subunit. Forms a cluster with proteins L3 and L19. In the 70S ribosome, L14 and L19 interact and together make contacts with the 16S rRNA in bridges B5 and B8.

Binds to 23S rRNA. Forms part of two intersubunit bridges in the 70S ribosome. The protein is Large ribosomal subunit protein uL14 of Mycolicibacterium vanbaalenii (strain DSM 7251 / JCM 13017 / BCRC 16820 / KCTC 9966 / NRRL B-24157 / PYR-1) (Mycobacterium vanbaalenii).